The sequence spans 205 residues: Large ribosomal subunit protein bL25 (205 aa).

The interval 180–205 (HEEVAEEAEETEGEDAEEAPAAEGEE) is disordered. Residues 183–205 (VAEEAEETEGEDAEEAPAAEGEE) show a composition bias toward acidic residues.

Belongs to the bacterial ribosomal protein bL25 family. CTC subfamily. In terms of assembly, part of the 50S ribosomal subunit; part of the 5S rRNA/L5/L18/L25 subcomplex. Contacts the 5S rRNA. Binds to the 5S rRNA independently of L5 and L18.

This is one of the proteins that binds to the 5S RNA in the ribosome where it forms part of the central protuberance. The protein is Large ribosomal subunit protein bL25 of Corynebacterium diphtheriae (strain ATCC 700971 / NCTC 13129 / Biotype gravis).